The primary structure comprises 541 residues: Chaperonin GroEL 2 (541 aa).

ATP contacts are provided by residues T30–P33, K51, D87–T91, G415, and D496.

This sequence belongs to the chaperonin (HSP60) family. Forms a cylinder of 14 subunits composed of two heptameric rings stacked back-to-back. Interacts with the co-chaperonin GroES.

The protein localises to the cytoplasm. It carries out the reaction ATP + H2O + a folded polypeptide = ADP + phosphate + an unfolded polypeptide.. Functionally, together with its co-chaperonin GroES, plays an essential role in assisting protein folding. The GroEL-GroES system forms a nano-cage that allows encapsulation of the non-native substrate proteins and provides a physical environment optimized to promote and accelerate protein folding. The polypeptide is Chaperonin GroEL 2 (Bradyrhizobium sp. (strain BTAi1 / ATCC BAA-1182)).